Reading from the N-terminus, the 208-residue chain is Uracil phosphoribosyltransferase (208 aa).

5-phospho-alpha-D-ribose 1-diphosphate contacts are provided by residues arginine 78, arginine 103, and 130–138 (DPMLATGVS). Residues isoleucine 193 and 198–200 (GDA) each bind uracil. Aspartate 199 provides a ligand contact to 5-phospho-alpha-D-ribose 1-diphosphate.

The protein belongs to the UPRTase family. Mg(2+) serves as cofactor.

It carries out the reaction UMP + diphosphate = 5-phospho-alpha-D-ribose 1-diphosphate + uracil. It participates in pyrimidine metabolism; UMP biosynthesis via salvage pathway; UMP from uracil: step 1/1. Its activity is regulated as follows. Allosterically activated by GTP. Functionally, catalyzes the conversion of uracil and 5-phospho-alpha-D-ribose 1-diphosphate (PRPP) to UMP and diphosphate. This Thermosipho melanesiensis (strain DSM 12029 / CIP 104789 / BI429) protein is Uracil phosphoribosyltransferase.